The primary structure comprises 214 residues: Pyridoxine/pyridoxamine 5'-phosphate oxidase (214 aa).

Substrate-binding positions include 8–11 and lysine 66; that span reads RINY. FMN contacts are provided by residues 61–66, 76–77, arginine 82, lysine 83, and glutamine 105; these read RIVLIK and FT. 3 residues coordinate substrate: tyrosine 123, arginine 127, and serine 131. FMN-binding positions include 140–141 and tryptophan 184; that span reads QS. A substrate-binding site is contributed by 190–192; sequence RLH. Arginine 194 provides a ligand contact to FMN.

Belongs to the pyridoxamine 5'-phosphate oxidase family. As to quaternary structure, homodimer. FMN is required as a cofactor.

The enzyme catalyses pyridoxamine 5'-phosphate + O2 + H2O = pyridoxal 5'-phosphate + H2O2 + NH4(+). It catalyses the reaction pyridoxine 5'-phosphate + O2 = pyridoxal 5'-phosphate + H2O2. Its pathway is cofactor metabolism; pyridoxal 5'-phosphate salvage; pyridoxal 5'-phosphate from pyridoxamine 5'-phosphate: step 1/1. It participates in cofactor metabolism; pyridoxal 5'-phosphate salvage; pyridoxal 5'-phosphate from pyridoxine 5'-phosphate: step 1/1. Functionally, catalyzes the oxidation of either pyridoxine 5'-phosphate (PNP) or pyridoxamine 5'-phosphate (PMP) into pyridoxal 5'-phosphate (PLP). This Burkholderia lata (strain ATCC 17760 / DSM 23089 / LMG 22485 / NCIMB 9086 / R18194 / 383) protein is Pyridoxine/pyridoxamine 5'-phosphate oxidase.